A 577-amino-acid polypeptide reads, in one-letter code: F-box-like/WD repeat-containing protein TBL1X (577 aa).

The 33-residue stretch at 55-87 (TSDEVNFLVYRYLQESGFSHSAFTFGIESHISQ) folds into the LisH domain. The F-box-like domain maps to 92-137 (GTLVPPAALISILQKGLQYVEAEISINEDGTVFDGRPIESLSLIDA). An N6-acetyllysine modification is found at lysine 153. Residues 177-202 (TTSAGVSHQNPSKNREATVNGEENRA) are disordered. The residue at position 183 (serine 183) is a Phosphoserine. WD repeat units follow at residues 230–269 (GHESEVFICAWNPVSDLLASGSGDSTARIWNLNENSNGGS), 286–325 (PSNKDVTSLDWNTNGTLLATGSYDGFARIWTEDGNLASTL), 327–366 (QHKGPIFALKWNRKGNYILSAGVDKTTIIWDAHTGEAKQQ), 369–409 (FHSA…KTFQ), 410–449 (GHTNEVNAIKWDPSGMLLASCSDDMTLKIWSMKQEVCIHD), 452–500 (AHNK…CTHT), 503–542 (KHQEPVYSVAFSPDGKYLASGSFDKCVHIWNTQSGNLVHS), and 544–576 (RGTGGIFEVCWNARGDKVGASASDGSVCVLDLR). A Glycyl lysine isopeptide (Lys-Gly) (interchain with G-Cter in SUMO2) cross-link involves residue lysine 340.

The protein belongs to the WD repeat EBI family. Homotetramer; dimer of dimers. Component of the N-Cor repressor complex, at least composed of NCOR1, NCOR2, HDAC3, TBL1X, TBL1R, CORO2A and GPS2. Interacts with GPS2 (when sumoylated); leading to protect GPS2 against degradation by the proteasome. Component of a E3 ubiquitin ligase complex containing UBE2D1, SIAH1, CACYBP/SIP, SKP1, APC and TBL1X. Probably part of other corepressor complexes, that do not contain NCOR1 and NCOR2. Interacts with histones H2B, H3a and H4. Interacts with MECP2; recruits TBL1X to the heterochromatin foci. Interacts with USP44. As to expression, ubiquitous.

The protein localises to the nucleus. Its function is as follows. F-box-like protein involved in the recruitment of the ubiquitin/19S proteasome complex to nuclear receptor-regulated transcription units. Plays an essential role in transcription activation mediated by nuclear receptors. Probably acts as integral component of corepressor complexes that mediates the recruitment of the 19S proteasome complex, leading to the subsequent proteasomal degradation of transcription repressor complexes, thereby allowing cofactor exchange. This Homo sapiens (Human) protein is F-box-like/WD repeat-containing protein TBL1X (TBL1X).